The chain runs to 511 residues: Type 2 DNA topoisomerase 6 subunit B-like (511 aa).

The disordered stretch occupies residues 398 to 485 (DSAQGTEDAP…RALAPGRASL (88 aa)). Residues 408–422 (DNSSLELLADTSGQA) are compositionally biased toward polar residues. Residues 440–451 (LRSARAPSPSEA) are compositionally biased toward low complexity. The span at 466–475 (RGREHREAHG) shows a compositional bias: basic and acidic residues.

The protein belongs to the TOP6B-like family. Heterotetramer of SPO11 and 2 TOP6BL chains. Interacts with SPO11. Detected in lung, spleen,colon and in skeletal muscle. Expressed in the ovaries, Fallopian tubes and uterus.

The protein resides in the chromosome. Functionally, component of a topoisomerase 6 complex specifically required for meiotic recombination. Together with SPO11, mediates DNA cleavage that forms the double-strand breaks (DSB) that initiate meiotic recombination. The complex promotes relaxation of negative and positive supercoiled DNA and DNA decatenation through cleavage and ligation cycles. This is Type 2 DNA topoisomerase 6 subunit B-like from Homo sapiens (Human).